A 305-amino-acid chain; its full sequence is UDP-3-O-acyl-N-acetylglucosamine deacetylase (305 aa).

Residues histidine 79, histidine 238, and aspartate 242 each coordinate Zn(2+). Histidine 265 serves as the catalytic Proton donor.

It belongs to the LpxC family. Requires Zn(2+) as cofactor.

The catalysed reaction is a UDP-3-O-[(3R)-3-hydroxyacyl]-N-acetyl-alpha-D-glucosamine + H2O = a UDP-3-O-[(3R)-3-hydroxyacyl]-alpha-D-glucosamine + acetate. Its pathway is glycolipid biosynthesis; lipid IV(A) biosynthesis; lipid IV(A) from (3R)-3-hydroxytetradecanoyl-[acyl-carrier-protein] and UDP-N-acetyl-alpha-D-glucosamine: step 2/6. Catalyzes the hydrolysis of UDP-3-O-myristoyl-N-acetylglucosamine to form UDP-3-O-myristoylglucosamine and acetate, the committed step in lipid A biosynthesis. The chain is UDP-3-O-acyl-N-acetylglucosamine deacetylase from Enterobacter sp. (strain 638).